The chain runs to 541 residues: Cytochrome P450 67 (541 aa).

C479 serves as a coordination point for heme.

It belongs to the cytochrome P450 family. It depends on heme as a cofactor.

This chain is Cytochrome P450 67 (CYP67), found in Uromyces fabae (Rust fungus).